The chain runs to 274 residues: Penicillin-insensitive murein endopeptidase (274 aa).

The signal sequence occupies residues 1 to 19; sequence MNKTAIALLALLASSASLA. Intrachain disulfides connect C44-C265, C187-C235, and C216-C223. Positions 110, 113, 120, 147, 150, and 211 each coordinate Zn(2+). The tract at residues 227–274 is disordered; the sequence is PLPPPGDGCGAELQSWFEPPKPGTTKPEKKTPPPLPPSCQALLDEHVI.

Belongs to the peptidase M74 family. As to quaternary structure, dimer. It depends on Zn(2+) as a cofactor.

It is found in the periplasm. Functionally, murein endopeptidase that cleaves the D-alanyl-meso-2,6-diamino-pimelyl amide bond that connects peptidoglycan strands. Likely plays a role in the removal of murein from the sacculus. The sequence is that of Penicillin-insensitive murein endopeptidase from Escherichia coli O17:K52:H18 (strain UMN026 / ExPEC).